The sequence spans 441 residues: Phenylalanine-4-hydroxylase (441 aa).

Residues 23-102 (FSISKGSDKI…KATTLQESSN (80 aa)) form the ACT domain. Residues H273, H278, and E318 each contribute to the Fe cation site.

It belongs to the biopterin-dependent aromatic amino acid hydroxylase family. In terms of assembly, homotetramer. Requires Fe(2+) as cofactor.

The enzyme catalyses (6R)-L-erythro-5,6,7,8-tetrahydrobiopterin + L-phenylalanine + O2 = (4aS,6R)-4a-hydroxy-L-erythro-5,6,7,8-tetrahydrobiopterin + L-tyrosine. The catalysed reaction is (6R)-L-erythro-5,6,7,8-tetrahydrobiopterin + L-tryptophan + O2 = 5-hydroxy-L-tryptophan + (4aS,6R)-4a-hydroxy-L-erythro-5,6,7,8-tetrahydrobiopterin. It functions in the pathway amino-acid degradation; L-phenylalanine degradation; acetoacetate and fumarate from L-phenylalanine: step 1/6. Catalyzes the hydroxylation of L-phenylalanine. Hydroxylates L-tryptophan to 5-hydroxy-L-tryptophan but does not hydroxylate L-tyrosine to L-DOPA. It uses D-threo-tetrahydrodictyopterin (DH4), also known as dictyoperin, as a cofactor. The protein is Phenylalanine-4-hydroxylase (pah) of Dictyostelium discoideum (Social amoeba).